Reading from the N-terminus, the 116-residue chain is Staphylococcal complement inhibitor (116 aa).

Residues 1–31 form the signal peptide; it reads MKIRKSILAGTLAIVLASPLVTNLDKNEAQA. The interval 62–79 is essential for activity; it reads LATGSLNTYYKRTIKISG.

This sequence belongs to the SCIN family.

It is found in the secreted. Functionally, involved in countering the first line of host defense mechanisms. Efficiently inhibits opsonization, phagocytosis and killing of S.aureus by human neutrophils. Acts by binding and stabilizing human C3 convertases (C4b2a and C3bBb), leading to their inactivation. The convertases are no longer able to cleave complement C3, therefore preventing further C3b deposition on the bacterial surface and phagocytosis of the bacterium. Also prevents C5a-induced neutrophil responses. This chain is Staphylococcal complement inhibitor (scn), found in Staphylococcus aureus (strain Mu50 / ATCC 700699).